A 332-amino-acid polypeptide reads, in one-letter code: Alanine racemase (332 aa).

Residue lysine 33 is the Proton acceptor; specific for D-alanine of the active site. The residue at position 33 (lysine 33) is an N6-(pyridoxal phosphate)lysine. Residue arginine 115 coordinates substrate. Tyrosine 245 (proton acceptor; specific for L-alanine) is an active-site residue. Position 286 (methionine 286) interacts with substrate.

This sequence belongs to the alanine racemase family. It depends on pyridoxal 5'-phosphate as a cofactor.

The catalysed reaction is L-alanine = D-alanine. It participates in amino-acid biosynthesis; D-alanine biosynthesis; D-alanine from L-alanine: step 1/1. Functionally, catalyzes the interconversion of L-alanine and D-alanine. May also act on other amino acids. In Nitratiruptor sp. (strain SB155-2), this protein is Alanine racemase (alr).